A 275-amino-acid polypeptide reads, in one-letter code: Tryptophan synthase alpha chain (275 aa).

Glu-51 acts as the Proton acceptor in catalysis.

The protein belongs to the TrpA family. Tetramer of two alpha and two beta chains.

The enzyme catalyses (1S,2R)-1-C-(indol-3-yl)glycerol 3-phosphate + L-serine = D-glyceraldehyde 3-phosphate + L-tryptophan + H2O. It participates in amino-acid biosynthesis; L-tryptophan biosynthesis; L-tryptophan from chorismate: step 5/5. In terms of biological role, the alpha subunit is responsible for the aldol cleavage of indoleglycerol phosphate to indole and glyceraldehyde 3-phosphate. This chain is Tryptophan synthase alpha chain, found in Caulobacter vibrioides (strain ATCC 19089 / CIP 103742 / CB 15) (Caulobacter crescentus).